We begin with the raw amino-acid sequence, 722 residues long: MGPKAKKSGSKKKKVTKAERLKLLQEEEDRRLKEEEEARLKYEKEEMERLEIQRIEKEKWNRLEAKDLERRNEELEELYLLERCFPEAEKLKQETRMLSQWKHYIQCDGSPDPSIAQEMNTFISLWKEKTNETFEEVIEKSKVVLNLIEKLKFILLETPLCDLQDKNIIQYQESILQLQELLHLKFNVATEILLRQASTLADLDSGNMEKVIKDENVTLYVWANLKKNPRHRSVRFSETQIGFEIPRILATSDIAVRLLHTHYDHVSALHPVSTPSKEHTSSATELVKDDVENVEKAISKEVEEESKQQEKQSHLIQEEKLKVEEEQDDIEVKMGSAEEESEAIKCELEMKVLSETVSAAQLLLVENSSEKPDFFENDMVDLFQFTTLGGVYHLDILELPPQCKPVKGWMIVEILKEGLQKYTYPPETTEDFETENAFPPIEVTLEVHENVIFFENPMVVRWDAEGKHWRTDGISNVSYKPNERLITFSLDTFGPVTLIQDAHINMPYQSWELRPLDVNKVLLTVTTVFTEIQIQIKENLCMLSSVKLKDKKHISILEGTWMTPIPFIIALKEAGLNIFPTRYSHFYVVINNKVPLVEVKAYRQMALLSSTFAFGWSKWNLLCNSTKVVFKVREHLPEECTENPNWALLMFSGDRAQRLKIKEESEAFSEALKEETEFHSTLYHMVRDFASKEAMEKVRSSNCQFVNSVCHMLLSTRLLSYS.

Over residues 1 to 15 (MGPKAKKSGSKKKKV) the composition is skewed to basic residues. Residues 1 to 20 (MGPKAKKSGSKKKKVTKAER) form a disordered region.

It belongs to the DNAI7 family. As to quaternary structure, part of the multisubunit axonemal dynein complex formed at least of two heavy chains and a number of intermediate and light chains. Associates with tubulin. Interacts with microtubule. Ubiquitinated. Ubiquitination leads to its degradation through the 26S proteasome. Ubiquitin-proteasome-mediated DNAI7 degradation occurs in mitosis.

It localises to the cell projection. The protein localises to the cilium. The protein resides in the cytoplasm. In terms of biological role, via its association with the multisubunit axonemal dynein complex, is potentially involved in the regulation of cilia function. May act as a cell cycle regulator. The sequence is that of Dynein axonemal intermediate chain 7 from Macaca fascicularis (Crab-eating macaque).